A 367-amino-acid chain; its full sequence is Glutamate 5-kinase (367 aa).

Position 8 (Lys-8) interacts with ATP. Residues Ser-49, Asp-136, and Asn-148 each coordinate substrate. ATP is bound by residues 168-169 (TD) and 210-216 (TGGMATK). The PUA domain occupies 275–353 (TGKLLLDAGA…DQIVQILGYE (79 aa)).

Belongs to the glutamate 5-kinase family.

Its subcellular location is the cytoplasm. It carries out the reaction L-glutamate + ATP = L-glutamyl 5-phosphate + ADP. Its pathway is amino-acid biosynthesis; L-proline biosynthesis; L-glutamate 5-semialdehyde from L-glutamate: step 1/2. Its function is as follows. Catalyzes the transfer of a phosphate group to glutamate to form L-glutamate 5-phosphate. The sequence is that of Glutamate 5-kinase from Synechococcus elongatus (strain ATCC 33912 / PCC 7942 / FACHB-805) (Anacystis nidulans R2).